The chain runs to 218 residues: MPMTLGYWDIRGLAHAIRLLLEYTGSSYEEKRYTMGDAPDYDRSQWLSEKFKLGLDFPNLPYLIDGSHKITQSNAILRYIARKHNLCGETEEEKIRVDILENQAMDVSNQLARVCYSPDFEKLKVEYLEQLPGMVKLFSQFLGQRTWFVGEKITFVDFLAYDILDLHLIFEPTCLDAFPNLKDFVARFEVLKRISAYMKTSRFLRTPLYTKVATWGNK.

Residues 1 to 88 (MPMTLGYWDI…YIARKHNLCG (88 aa)) enclose the GST N-terminal domain. Residues 7 to 8 (YW), 46 to 50 (WLSEK), 59 to 60 (NL), and 72 to 73 (QS) contribute to the glutathione site. A GST C-terminal domain is found at 90-208 (TEEEKIRVDI…KTSRFLRTPL (119 aa)). Residue Tyr-116 participates in substrate binding.

The protein belongs to the GST superfamily. Mu family. Homodimer. In terms of tissue distribution, widely expressed.

Its subcellular location is the cytoplasm. The enzyme catalyses RX + glutathione = an S-substituted glutathione + a halide anion + H(+). It carries out the reaction 1-chloro-2,4-dinitrobenzene + glutathione = 2,4-dinitrophenyl-S-glutathione + chloride + H(+). The catalysed reaction is (13S,14S)-epoxy-(4Z,7Z,9E,11E,16Z,19Z)-docosahexaenoate + glutathione = (13R)-S-glutathionyl-(14S)-hydroxy-(4Z,7Z,9E,11E,16Z,19Z)-docosahexaenoate. It catalyses the reaction leukotriene C4 = leukotriene A4 + glutathione. Functionally, conjugation of reduced glutathione to a wide number of exogenous and endogenous hydrophobic electrophiles. Catalyzes the conjugation of leukotriene A4 with reduced glutathione (GSH) to form leukotriene C4. Can also catalyze the transfer of a glutathionyl group from glutathione (GSH) to 13(S),14(S)-epoxy-docosahexaenoic acid to form maresin conjugate in tissue regeneration 1 (MCTR1), a bioactive lipid mediator that possess potent anti-inflammatory and proresolving actions. This chain is Glutathione S-transferase Mu 4, found in Mus musculus (Mouse).